Reading from the N-terminus, the 400-residue chain is Acetate kinase (400 aa).

N7 provides a ligand contact to Mg(2+). K14 is an ATP binding site. R91 contacts substrate. The active-site Proton donor/acceptor is the D148. ATP contacts are provided by residues 208-212, 283-285, and 332-336; these read HIGNG, DFR, and GIGEH. E387 lines the Mg(2+) pocket.

The protein belongs to the acetokinase family. Homodimer. Mg(2+) serves as cofactor. Mn(2+) is required as a cofactor.

The protein localises to the cytoplasm. The enzyme catalyses acetate + ATP = acetyl phosphate + ADP. The protein operates within metabolic intermediate biosynthesis; acetyl-CoA biosynthesis; acetyl-CoA from acetate: step 1/2. In terms of biological role, catalyzes the formation of acetyl phosphate from acetate and ATP. Can also catalyze the reverse reaction. This is Acetate kinase from Clostridium beijerinckii (strain ATCC 51743 / NCIMB 8052) (Clostridium acetobutylicum).